The following is a 314-amino-acid chain: Cathepsin L 2 (314 aa).

The signal sequence occupies residues 1 to 24 (MMLLGASLYLNNTQEVSDEIDTAN). Residues 25-109 (LYANWKMKYN…NASNANFQYK (85 aa)) constitute a propeptide, activation peptide. Disulfide bonds link Cys132/Cys175, Cys166/Cys207, and Cys259/Cys302. Cys135 is an active-site residue. Active-site residues include His265 and Asn282.

This sequence belongs to the peptidase C1 family.

The protein resides in the secreted. It catalyses the reaction Specificity close to that of papain. As compared to cathepsin B, cathepsin L exhibits higher activity toward protein substrates, but has little activity on Z-Arg-Arg-NHMec, and no peptidyl-dipeptidase activity.. In terms of biological role, may be involved in extracellular digestion. This Paramecium tetraurelia protein is Cathepsin L 2.